An 85-amino-acid polypeptide reads, in one-letter code: Small ribosomal subunit protein uS17 (85 aa).

This sequence belongs to the universal ribosomal protein uS17 family. Part of the 30S ribosomal subunit.

In terms of biological role, one of the primary rRNA binding proteins, it binds specifically to the 5'-end of 16S ribosomal RNA. The sequence is that of Small ribosomal subunit protein uS17 from Desulforudis audaxviator (strain MP104C).